The chain runs to 431 residues: Serine--tRNA ligase (431 aa).

Position 237–239 (237–239) interacts with L-serine; that stretch reads TAE. 268–270 provides a ligand contact to ATP; it reads RSE. Position 291 (E291) interacts with L-serine. ATP is bound at residue 355–358; that stretch reads EISS. S390 contacts L-serine.

This sequence belongs to the class-II aminoacyl-tRNA synthetase family. Type-1 seryl-tRNA synthetase subfamily. Homodimer. The tRNA molecule binds across the dimer.

It is found in the cytoplasm. The enzyme catalyses tRNA(Ser) + L-serine + ATP = L-seryl-tRNA(Ser) + AMP + diphosphate + H(+). It carries out the reaction tRNA(Sec) + L-serine + ATP = L-seryl-tRNA(Sec) + AMP + diphosphate + H(+). It participates in aminoacyl-tRNA biosynthesis; selenocysteinyl-tRNA(Sec) biosynthesis; L-seryl-tRNA(Sec) from L-serine and tRNA(Sec): step 1/1. Functionally, catalyzes the attachment of serine to tRNA(Ser). Is also able to aminoacylate tRNA(Sec) with serine, to form the misacylated tRNA L-seryl-tRNA(Sec), which will be further converted into selenocysteinyl-tRNA(Sec). The polypeptide is Serine--tRNA ligase (Neisseria gonorrhoeae (strain ATCC 700825 / FA 1090)).